A 277-amino-acid chain; its full sequence is Release factor glutamine methyltransferase (277 aa).

Residues 119-123 (GTGTG), Asp142, and Asn184 each bind S-adenosyl-L-methionine. 184 to 187 (NPPY) is a binding site for substrate.

It belongs to the protein N5-glutamine methyltransferase family. PrmC subfamily.

The catalysed reaction is L-glutaminyl-[peptide chain release factor] + S-adenosyl-L-methionine = N(5)-methyl-L-glutaminyl-[peptide chain release factor] + S-adenosyl-L-homocysteine + H(+). Methylates the class 1 translation termination release factors RF1/PrfA and RF2/PrfB on the glutamine residue of the universally conserved GGQ motif. The sequence is that of Release factor glutamine methyltransferase from Enterococcus faecalis (strain ATCC 700802 / V583).